The following is a 310-amino-acid chain: Homoserine kinase (310 aa).

91 to 101 contributes to the ATP binding site; the sequence is PIGSGLGSSAC.

This sequence belongs to the GHMP kinase family. Homoserine kinase subfamily.

The protein resides in the cytoplasm. It carries out the reaction L-homoserine + ATP = O-phospho-L-homoserine + ADP + H(+). Its pathway is amino-acid biosynthesis; L-threonine biosynthesis; L-threonine from L-aspartate: step 4/5. Functionally, catalyzes the ATP-dependent phosphorylation of L-homoserine to L-homoserine phosphate. This Escherichia coli (strain K12 / MC4100 / BW2952) protein is Homoserine kinase.